The following is a 186-amino-acid chain: Peptidyl-tRNA hydrolase (186 aa).

Tyrosine 13 lines the tRNA pocket. Histidine 18 functions as the Proton acceptor in the catalytic mechanism. The tRNA site is built by tyrosine 59, asparagine 61, and asparagine 107.

The protein belongs to the PTH family. Monomer.

The protein localises to the cytoplasm. It catalyses the reaction an N-acyl-L-alpha-aminoacyl-tRNA + H2O = an N-acyl-L-amino acid + a tRNA + H(+). Hydrolyzes ribosome-free peptidyl-tRNAs (with 1 or more amino acids incorporated), which drop off the ribosome during protein synthesis, or as a result of ribosome stalling. Its function is as follows. Catalyzes the release of premature peptidyl moieties from peptidyl-tRNA molecules trapped in stalled 50S ribosomal subunits, and thus maintains levels of free tRNAs and 50S ribosomes. In Thermotoga sp. (strain RQ2), this protein is Peptidyl-tRNA hydrolase.